A 321-amino-acid chain; its full sequence is D-alanine--D-alanine ligase (321 aa).

The ATP-grasp domain maps to 103 to 303 (KKILTPENIP…YVALCRMIVE (201 aa)). An ATP-binding site is contributed by 129 to 186 (PLPRPYVLKPVNEGSSVGVAIIDESFNDGQPIRKDQIDPWKNFKTLLAEPFIKGRELT). 3 residues coordinate Mg(2+): D254, E270, and N272.

The protein belongs to the D-alanine--D-alanine ligase family. It depends on Mg(2+) as a cofactor. Requires Mn(2+) as cofactor.

Its subcellular location is the cytoplasm. The enzyme catalyses 2 D-alanine + ATP = D-alanyl-D-alanine + ADP + phosphate + H(+). The protein operates within cell wall biogenesis; peptidoglycan biosynthesis. Functionally, cell wall formation. This chain is D-alanine--D-alanine ligase, found in Zymomonas mobilis subsp. mobilis (strain ATCC 31821 / ZM4 / CP4).